Consider the following 932-residue polypeptide: Protocadherin gamma-A6 (932 aa).

The first 29 residues, 1–29 (MAPPQRHPQRSEQVLLLTLLGTLWGAAAA), serve as a signal peptide directing secretion. 6 consecutive Cadherin domains span residues 30–133 (QIRY…TPRF), 134–242 (LKEE…TPMF), 243–347 (TQPV…VPEV), 348–452 (VVTS…PPTF), 453–562 (PHSS…APEI), and 570–682 (DGST…EPSA). Topologically, residues 30–692 (QIRYSIPEEL…KPNDSDLTLY (663 aa)) are extracellular. N-linked (GlcNAc...) asparagine glycosylation is present at Asn-81. Residues Asn-419 and Asn-545 are each glycosylated (N-linked (GlcNAc...) asparagine). Residue Asn-685 is glycosylated (N-linked (GlcNAc...) asparagine). A helical transmembrane segment spans residues 693-713 (LVVAVAAVSCVFLAFVIVLLA). The Cytoplasmic segment spans residues 714-932 (LRLQRWHKSR…KKKSGKKEKK (219 aa)). Disordered regions lie at residues 804 to 841 (PRQL…WPNN) and 902 to 932 (ATLT…KEKK). Polar residues predominate over residues 806–841 (QLQQAPPNTDWRFSQAQRPGTSGSQNGDDTGTWPNN). Positions 922–932 (NKKKSGKKEKK) are enriched in basic residues.

Its subcellular location is the cell membrane. In terms of biological role, potential calcium-dependent cell-adhesion protein. May be involved in the establishment and maintenance of specific neuronal connections in the brain. The sequence is that of Protocadherin gamma-A6 (PCDHGA6) from Homo sapiens (Human).